The following is a 130-amino-acid chain: uncharacterized protein (130 aa).

Over 1–58 (MREQLKLFTREIVDFTFLILSGFDYYQTLLISSNSSKKRPKDSSLLSEKKKKKKKKKK) the chain is Cytoplasmic. Residues 34-57 (NSSKKRPKDSSLLSEKKKKKKKKK) are disordered. Residues 59 to 79 (DVLSYLSYLKDLPFVPFLFWQ) traverse the membrane as a helical segment. Over 80–94 (PGYSQREKNPRQHSL) the chain is Extracellular. Residues 95–115 (FIMTITKPGMISMADMNYVVS) traverse the membrane as a helical segment. Topologically, residues 116 to 130 (KNRSLNRPAERGGNR) are cytoplasmic.

It localises to the membrane. This is an uncharacterized protein from Saccharomyces cerevisiae (strain ATCC 204508 / S288c) (Baker's yeast).